The sequence spans 560 residues: Vacuolar protein 8 (560 aa).

Gly2 carries the N-myristoyl glycine lipid modification. Cys4 carries the S-palmitoyl cysteine lipid modification. ARM repeat units lie at residues 39 to 76 (NRAE…FAEI), 77 to 116 (TERD…NLAV), 118 to 157 (TDNK…NLAT), 159 to 198 (EENK…NMTH), 200 to 239 (DENR…NIAV), 243 to 282 (NRRK…NLAS), 284 to 323 (EKYQ…NISI), 325 to 365 (PQNE…NLAA), and 409 to 448 (DELK…NLSS).

It belongs to the beta-catenin family.

It localises to the vacuole membrane. Its function is as follows. Functions in both vacuole inheritance and protein targeting from the cytoplasm to vacuole. This chain is Vacuolar protein 8 (VAC8), found in Chaetomium globosum (strain ATCC 6205 / CBS 148.51 / DSM 1962 / NBRC 6347 / NRRL 1970) (Soil fungus).